Consider the following 361-residue polypeptide: Alternative oxidase, mitochondrial (361 aa).

A helical transmembrane segment spans residues Tyr156–Arg178. Glu164, Glu203, and His206 together coordinate Fe cation. The chain crosses the membrane as a helical span at residues Trp218 to Leu240. Positions 254, 309, and 312 each coordinate Fe cation. A compositionally biased stretch (polar residues) spans Thr318–Pro328. Positions Thr318 to Met361 are disordered. Residues Pro343 to Met361 are compositionally biased toward basic and acidic residues.

The protein belongs to the alternative oxidase family. Fe cation is required as a cofactor.

The protein resides in the mitochondrion inner membrane. Its function is as follows. Catalyzes cyanide-resistant oxygen consumption. May increase respiration when the cytochrome respiratory pathway is restricted, or in response to low temperatures. This chain is Alternative oxidase, mitochondrial (AOX1), found in Venturia inaequalis (Apple scab fungus).